The primary structure comprises 435 residues: Asparagine--tRNA ligase (435 aa).

It belongs to the class-II aminoacyl-tRNA synthetase family. As to quaternary structure, homodimer.

The protein localises to the cytoplasm. It carries out the reaction tRNA(Asn) + L-asparagine + ATP = L-asparaginyl-tRNA(Asn) + AMP + diphosphate + H(+). The sequence is that of Asparagine--tRNA ligase from Leptospira interrogans serogroup Icterohaemorrhagiae serovar Lai (strain 56601).